Reading from the N-terminus, the 286-residue chain is 2-hydroxy-6-oxo-6-phenylhexa-2,4-dienoate hydrolase (286 aa).

Substrate contacts are provided by residues 42-43, Asn-51, Asn-111, Thr-180, and Arg-190; that span reads GG. His-265 functions as the Proton acceptor in the catalytic mechanism. Trp-266 contacts substrate.

It belongs to the AB hydrolase superfamily. BphD family. Homodimer.

It catalyses the reaction 2,6-dioxo-6-phenylhexa-3-enoate + H2O = 2-oxopent-4-enoate + benzoate + H(+). It participates in xenobiotic degradation; biphenyl degradation; 2-hydroxy-2,4-pentadienoate and benzoate from biphenyl: step 4/4. Catalyzes an unusual C-C bond hydrolysis of 2-hydroxy-6-oxo-6-phenylhexa-2,4-dienoic acid (HOPDA) to produce benzoic acid and 2-hydroxy-2,4-pentadienoic acid (HPD). The chain is 2-hydroxy-6-oxo-6-phenylhexa-2,4-dienoate hydrolase from Comamonas testosteroni (Pseudomonas testosteroni).